Reading from the N-terminus, the 778-residue chain is General transcription and DNA repair factor IIH helicase subunit XPD/RAD3 (778 aa).

The Helicase ATP-binding domain occupies 7–285 (DLPVLFPYPK…KVDSQKLQDE (279 aa)). 42 to 49 (MPSGTGKT) is a binding site for ATP. 4 residues coordinate [4Fe-4S] cluster: Cys115, Cys133, Cys156, and Cys191. Residues 235-238 (DEAH) carry the DEAH box motif. Over residues 750 to 765 (SRKDQGGFIENENKEG) the composition is skewed to basic and acidic residues. The tract at residues 750–778 (SRKDQGGFIENENKEGEQDEDEDEDIEMQ) is disordered. The span at 766–778 (EQDEDEDEDIEMQ) shows a compositional bias: acidic residues.

The protein belongs to the helicase family. RAD3/XPD subfamily. Component of the 7-subunit TFIIH core complex composed of XPB/SSL2, XPD/RAD3, SSL1, TFB1, TFB2, TFB4 and TFB5, which is active in NER. The core complex associates with the 3-subunit CTD-kinase module TFIIK composed of CCL1, KIN28 and TFB3 to form the 10-subunit holoenzyme (holo-TFIIH) active in transcription. An additionnal subunit, TFB6, plays a role in the dissociation of the SSL2 helicase from TFIIH after transcription initiation. [4Fe-4S] cluster is required as a cofactor. Requires Mg(2+) as cofactor.

It is found in the nucleus. The enzyme catalyses Couples ATP hydrolysis with the unwinding of duplex DNA at the replication fork by translocating in the 5'-3' direction. This creates two antiparallel DNA single strands (ssDNA). The leading ssDNA polymer is the template for DNA polymerase III holoenzyme which synthesizes a continuous strand.. The catalysed reaction is ATP + H2O = ADP + phosphate + H(+). In terms of biological role, ATP-dependent 5'-3' DNA helicase. Component of the general transcription and DNA repair factor IIH (TFIIH) core complex, which is involved in general and transcription-coupled nucleotide excision repair (NER) of damaged DNA and, when complexed to TFIIK, in RNA transcription by RNA polymerase II. In NER, TFIIH acts by opening DNA around the lesion to allow the excision of the damaged oligonucleotide and its replacement by a new DNA fragment. The ATP-dependent helicase activity of XPD/RAD3 is required for DNA opening. In transcription, TFIIH has an essential role in transcription initiation. When the pre-initiation complex (PIC) has been established, TFIIH is required for promoter opening and promoter escape. Phosphorylation of the C-terminal tail (CTD) of the largest subunit of RNA polymerase II by the kinase module TFIIK controls the initiation of transcription. XPD/RAD3 acts by forming a bridge between TFIIK and the core-TFIIH complex. Involved in the maintenance of the fidelity of DNA replication. Has single-stranded DNA-dependent ATPase activity. 5'-3' DNA helicase activity requires ATP (dATP partially substitutes), will unwind over 800 bp dsDNA. Able to unwind an RNA:DNA hybrid. This Saccharomyces cerevisiae (strain ATCC 204508 / S288c) (Baker's yeast) protein is General transcription and DNA repair factor IIH helicase subunit XPD/RAD3.